The following is a 159-amino-acid chain: Succinate dehydrogenase [ubiquinone] cytochrome b small subunit, mitochondrial (159 aa).

A mitochondrion-targeting transit peptide spans 1–30 (MLQTRLGLGALRQGRLLFAVKSFSTTSVAK). The Mitochondrial matrix segment spans residues 31–65 (IFPPPPQTIKGTVNDAAVFPHHSKLHGSYHWDFER). The helical transmembrane segment at 66–82 (IIAIAMVPQVMIPLFTG) threads the bilayer. The Mitochondrial intermembrane segment spans residues 83-89 (TSHPLMD). The helical transmembrane segment at 90-109 (AALACTLITHAHLGFESCVI) threads the bilayer. Histidine 99 is a binding site for heme. Topologically, residues 110–122 (DYFPARRFKKLSP) are mitochondrial matrix. Tyrosine 111 is an a ubiquinone binding site. A helical membrane pass occupies residues 123-140 (LMHWILRGCTVLTLIGVY). Topologically, residues 141 to 159 (EFNTNDIGLTEGIKKLWKS) are mitochondrial intermembrane.

Belongs to the CybS family. Forms part of complex II containing four subunits: a flavoprotein (FP), an iron-sulfur protein (IP) and a cytochrome b composed of a large and a small subunit.

The protein resides in the mitochondrion inner membrane. Its pathway is carbohydrate metabolism; tricarboxylic acid cycle. In terms of biological role, membrane-anchoring subunit of succinate dehydrogenase (SDH) that is involved in complex II of the mitochondrial electron transport chain and is responsible for transferring electrons from succinate to ubiquinone (coenzyme Q). The polypeptide is Succinate dehydrogenase [ubiquinone] cytochrome b small subunit, mitochondrial (sdh4) (Schizosaccharomyces pombe (strain 972 / ATCC 24843) (Fission yeast)).